Here is a 667-residue protein sequence, read N- to C-terminus: E3 ubiquitin-protein ligase Midline-1 (667 aa).

The RING-type zinc-finger motif lies at 10–60 (CPICLELFEDPLLLPCAHSLCFNCAHRILVSHCATNEPVESINAFQCPTCR). A phosphoserine mark is found at Ser92 and Ser96. B box-type zinc fingers lie at residues 116–165 (KVLC…IEPI) and 172–212 (GLMC…VAAL). Residues Cys119, Cys122, Cys134, Cys137, Cys142, Cys145, His150, His159, Cys175, His178, Cys198, and His204 each coordinate Zn(2+). Residues 205-264 (RDHQVAALSERYDKLKQNLESNLTNLIKRNTELETLLAKLIQTCQHVEVNASRQEAKLTE) adopt a coiled-coil conformation. A COS domain is found at 320-379 (LKENDHARFLQTAKNITERVSMATASSQVLIPEINLNDTFDTFALDFSREKKLLECLDYL). One can recognise a Fibronectin type-III domain in the interval 381–484 (APNPPTIREE…EPGKLKTNSQ (104 aa)). The segment covering 471-485 (SRSSEPGKLKTNSQP) has biased composition (polar residues). Positions 471 to 524 (SRSSEPGKLKTNSQPFKLDPKSAHRKLKVSHDNLTVERDESSSKKSHTPERFTS) are disordered. The B30.2/SPRY domain maps to 482–659 (NSQPFKLDPK…IITGLPIPDH (178 aa)). Residues 499–520 (VSHDNLTVERDESSSKKSHTPE) show a composition bias toward basic and acidic residues. The residue at position 511 (Ser511) is a Phosphoserine.

The protein belongs to the TRIM/RBCC family. Homodimer or heterodimer with MID2. Interacts with IGBP1.

The protein localises to the cytoplasm. It localises to the cytoskeleton. The catalysed reaction is S-ubiquitinyl-[E2 ubiquitin-conjugating enzyme]-L-cysteine + [acceptor protein]-L-lysine = [E2 ubiquitin-conjugating enzyme]-L-cysteine + N(6)-ubiquitinyl-[acceptor protein]-L-lysine.. Its function is as follows. Has E3 ubiquitin ligase activity towards IGBP1, promoting its monoubiquitination, which results in deprotection of the catalytic subunit of protein phosphatase PP2A, and its subsequent degradation by polyubiquitination. The protein is E3 ubiquitin-protein ligase Midline-1 (Mid1) of Rattus norvegicus (Rat).